The chain runs to 313 residues: Short-chain dehydrogenase/reductase family 9C member 7 (313 aa).

29–53 is an NADP(+) binding site; it reads FITGCDSGFGNLLAKQLVDRGMKVL. Ser160 provides a ligand contact to substrate. Tyr172 serves as the catalytic Proton acceptor. The residue at position 185 (Ser185) is a Phosphoserine.

The protein belongs to the short-chain dehydrogenases/reductases (SDR) family. In terms of tissue distribution, highly expressed in liver.

The protein localises to the cytoplasm. It catalyses the reaction a N-[omega-(9R,10R)-epoxy-(13R)-hydroxy-(11E)-octadecenoyloxy]acyl-beta-D-glucosyl-(1&lt;-&gt;1)-sphing-4E-enine + NAD(+) = a N-[omega-(9R,10R)-epoxy-13-oxo-(11E)-octadecenoyloxy]acyl-beta-D-glucosyl-(1&lt;-&gt;1)-sphing-4E-enine + NADH + H(+). The enzyme catalyses a N-[omega-(9R,10R)-epoxy-(13R)-hydroxy-(11E)-octadecenoyloxy]-acylsphing-4E-enine + NAD(+) = a N-[omega-(9R,10R)-epoxy-13-oxo-(11E)-octadecenoyloxy]-acylsphing-4E-enine + NADH + H(+). Plays a crucial role in the formation of the epidermal permeability barrier. Catalyzes the NAD+-dependent dehydrogenation of the linoleate 9,10-trans-epoxy-11E-13-alcohol esterified in omega-O-acylceramides (such as in N-[omega-(9R,10R)-epoxy-(13R)-hydroxy-(11E)-octadecenoyloxy]-acylsphing-4E-enine) to the corresponding 13-ketone, the reactive moiety required for binding of epidermal ceramides to proteins. Displays weak conversion of all-trans-retinal to all-trans-retinol in the presence of NADH. Has apparently no steroid dehydrogenase activity. The protein is Short-chain dehydrogenase/reductase family 9C member 7 (Sdr9c7) of Mus musculus (Mouse).